We begin with the raw amino-acid sequence, 406 residues long: Phosphopentomutase (406 aa).

Residues Asp-10, Asp-305, His-310, Asp-346, His-347, and His-358 each contribute to the Mn(2+) site.

Belongs to the phosphopentomutase family. The cofactor is Mn(2+).

It localises to the cytoplasm. It carries out the reaction 2-deoxy-alpha-D-ribose 1-phosphate = 2-deoxy-D-ribose 5-phosphate. The enzyme catalyses alpha-D-ribose 1-phosphate = D-ribose 5-phosphate. It participates in carbohydrate degradation; 2-deoxy-D-ribose 1-phosphate degradation; D-glyceraldehyde 3-phosphate and acetaldehyde from 2-deoxy-alpha-D-ribose 1-phosphate: step 1/2. Functionally, isomerase that catalyzes the conversion of deoxy-ribose 1-phosphate (dRib-1-P) and ribose 1-phosphate (Rib-1-P) to deoxy-ribose 5-phosphate (dRib-5-P) and ribose 5-phosphate (Rib-5-P), respectively. The sequence is that of Phosphopentomutase from Methylorubrum extorquens (strain PA1) (Methylobacterium extorquens).